A 347-amino-acid chain; its full sequence is NADH-ubiquinone oxidoreductase chain 2 (347 aa).

Transmembrane regions (helical) follow at residues 3-23 (PLAL…TMMS), 59-79 (YFMT…INLM), 93-115 (VASN…HFWV), 150-170 (NTNL…WGGL), 178-198 (ILAY…PFNP), 199-219 (TLTL…FMIL), 242-262 (IMLM…GFMP), 274-294 (NSII…YFYM), and 326-346 (LPTL…ISML).

The protein belongs to the complex I subunit 2 family. Core subunit of respiratory chain NADH dehydrogenase (Complex I) which is composed of 45 different subunits. Interacts with TMEM242.

It is found in the mitochondrion inner membrane. The enzyme catalyses a ubiquinone + NADH + 5 H(+)(in) = a ubiquinol + NAD(+) + 4 H(+)(out). In terms of biological role, core subunit of the mitochondrial membrane respiratory chain NADH dehydrogenase (Complex I) which catalyzes electron transfer from NADH through the respiratory chain, using ubiquinone as an electron acceptor. Essential for the catalytic activity and assembly of complex I. In Loxodonta africana (African elephant), this protein is NADH-ubiquinone oxidoreductase chain 2.